A 542-amino-acid polypeptide reads, in one-letter code: CTP synthase (542 aa).

Residues 1-265 (MTRYIFVTGG…DDIVVERFGL (265 aa)) are amidoligase domain. S13 contacts CTP. S13 is a UTP binding site. ATP is bound by residues 14 to 19 (SLGKGI) and D71. The Mg(2+) site is built by D71 and E139. Residues 146–148 (DIE), 186–191 (KTKPTQ), and K222 contribute to the CTP site. UTP is bound by residues 186–191 (KTKPTQ) and K222. One can recognise a Glutamine amidotransferase type-1 domain in the interval 290–541 (TIAMVGKYME…VNAALKYSGK (252 aa)). G351 is an L-glutamine binding site. The active-site Nucleophile; for glutamine hydrolysis is the C378. L-glutamine-binding positions include 379–382 (LGMQ), E402, and R469. Active-site residues include H514 and E516.

This sequence belongs to the CTP synthase family. Homotetramer.

The enzyme catalyses UTP + L-glutamine + ATP + H2O = CTP + L-glutamate + ADP + phosphate + 2 H(+). It carries out the reaction L-glutamine + H2O = L-glutamate + NH4(+). The catalysed reaction is UTP + NH4(+) + ATP = CTP + ADP + phosphate + 2 H(+). It functions in the pathway pyrimidine metabolism; CTP biosynthesis via de novo pathway; CTP from UDP: step 2/2. With respect to regulation, allosterically activated by GTP, when glutamine is the substrate; GTP has no effect on the reaction when ammonia is the substrate. The allosteric effector GTP functions by stabilizing the protein conformation that binds the tetrahedral intermediate(s) formed during glutamine hydrolysis. Inhibited by the product CTP, via allosteric rather than competitive inhibition. In terms of biological role, catalyzes the ATP-dependent amination of UTP to CTP with either L-glutamine or ammonia as the source of nitrogen. Regulates intracellular CTP levels through interactions with the four ribonucleotide triphosphates. The polypeptide is CTP synthase (Pseudomonas aeruginosa (strain LESB58)).